A 141-amino-acid chain; its full sequence is Nucleoside diphosphate kinase (141 aa).

ATP contacts are provided by Lys-11, Phe-59, Arg-87, Thr-93, Arg-104, and Asn-114. The active-site Pros-phosphohistidine intermediate is His-117.

Belongs to the NDK family. In terms of assembly, homotetramer. Mg(2+) is required as a cofactor.

It is found in the cytoplasm. The enzyme catalyses a 2'-deoxyribonucleoside 5'-diphosphate + ATP = a 2'-deoxyribonucleoside 5'-triphosphate + ADP. It catalyses the reaction a ribonucleoside 5'-diphosphate + ATP = a ribonucleoside 5'-triphosphate + ADP. Major role in the synthesis of nucleoside triphosphates other than ATP. The ATP gamma phosphate is transferred to the NDP beta phosphate via a ping-pong mechanism, using a phosphorylated active-site intermediate. In Verminephrobacter eiseniae (strain EF01-2), this protein is Nucleoside diphosphate kinase.